Consider the following 216-residue polypeptide: Cytidylate kinase (216 aa).

9 to 17 is an ATP binding site; sequence GPAASGKGT.

Belongs to the cytidylate kinase family. Type 1 subfamily.

It localises to the cytoplasm. It catalyses the reaction CMP + ATP = CDP + ADP. The catalysed reaction is dCMP + ATP = dCDP + ADP. The sequence is that of Cytidylate kinase from Caulobacter sp. (strain K31).